A 192-amino-acid chain; its full sequence is Imidazoleglycerol-phosphate dehydratase (192 aa).

The protein belongs to the imidazoleglycerol-phosphate dehydratase family.

It is found in the cytoplasm. It catalyses the reaction D-erythro-1-(imidazol-4-yl)glycerol 3-phosphate = 3-(imidazol-4-yl)-2-oxopropyl phosphate + H2O. It participates in amino-acid biosynthesis; L-histidine biosynthesis; L-histidine from 5-phospho-alpha-D-ribose 1-diphosphate: step 6/9. In Staphylococcus aureus (strain bovine RF122 / ET3-1), this protein is Imidazoleglycerol-phosphate dehydratase.